We begin with the raw amino-acid sequence, 773 residues long: Mitogen-activated protein kinase kinase kinase 9 (773 aa).

Positions 1–14 are enriched in basic and acidic residues; the sequence is MKKSSDKSPVRQHD. Residues 1–35 are disordered; sequence MKKSSDKSPVRQHDTATQINSDAVSSSTSFTDSDS. A compositionally biased stretch (low complexity) spans 21–35; that stretch reads SDAVSSSTSFTDSDS. Residues Ser-79 and Ser-150 each carry the phosphoserine modification. The interval 100 to 493 is regulatory region; sequence FDKILALMKK…VSNTSPICVS (394 aa). Phosphoserine; by MAPK4 is present on Ser-365. The segment at 426–455 is disordered; the sequence is EIVRRPSSSSSSENGCDEEEAEDDKVEKEE. The span at 440 to 449 shows a compositional bias: acidic residues; sequence GCDEEEAEDD. One can recognise a Protein kinase domain in the interval 501 to 755; that stretch reads WQKGQLLRQG…ATELLNHPFV (255 aa). Residues 507–515 and Lys-529 contribute to the ATP site; that span reads LRQGSFGSV. Asp-624 serves as the catalytic Proton acceptor. At Ser-768 the chain carries Phosphoserine.

It belongs to the protein kinase superfamily. STE Ser/Thr protein kinase family. MAP kinase kinase kinase subfamily. In terms of assembly, interacts with MPK4. Phosphorylated by MPK4 upon treatment with flg22. As to expression, expressed at least in rosette leaves (at protein level).

It catalyses the reaction L-seryl-[protein] + ATP = O-phospho-L-seryl-[protein] + ADP + H(+). The catalysed reaction is L-threonyl-[protein] + ATP = O-phospho-L-threonyl-[protein] + ADP + H(+). Triggers SUMM2-mediated immune responses, including cell death and defense responses. Probably inhibited by the MEKK1-MKK1/ MKK2-MPK4 kinase cascade to adjust plant defense. Seems to contribute in transducing external glutamate (L-Glu) signal that elicits large-scale changes in root architecture. This chain is Mitogen-activated protein kinase kinase kinase 9, found in Arabidopsis thaliana (Mouse-ear cress).